We begin with the raw amino-acid sequence, 176 residues long: RNA 2',3'-cyclic phosphodiesterase (176 aa).

H39 acts as the Proton donor in catalysis. Short sequence motifs (HXTX) lie at residues 39-42 (HITL) and 122-125 (HLTV). H122 serves as the catalytic Proton acceptor.

The protein belongs to the 2H phosphoesterase superfamily. ThpR family.

The enzyme catalyses a 3'-end 2',3'-cyclophospho-ribonucleotide-RNA + H2O = a 3'-end 2'-phospho-ribonucleotide-RNA + H(+). Functionally, hydrolyzes RNA 2',3'-cyclic phosphodiester to an RNA 2'-phosphomonoester. In Archaeoglobus fulgidus (strain ATCC 49558 / DSM 4304 / JCM 9628 / NBRC 100126 / VC-16), this protein is RNA 2',3'-cyclic phosphodiesterase.